The chain runs to 114 residues: Ribonuclease P protein component (114 aa).

It belongs to the RnpA family. Consists of a catalytic RNA component (M1 or rnpB) and a protein subunit.

The enzyme catalyses Endonucleolytic cleavage of RNA, removing 5'-extranucleotides from tRNA precursor.. Functionally, RNaseP catalyzes the removal of the 5'-leader sequence from pre-tRNA to produce the mature 5'-terminus. It can also cleave other RNA substrates such as 4.5S RNA. The protein component plays an auxiliary but essential role in vivo by binding to the 5'-leader sequence and broadening the substrate specificity of the ribozyme. The protein is Ribonuclease P protein component of Buchnera aphidicola subsp. Schizaphis graminum (strain Sg).